The sequence spans 873 residues: Probable beta-glucosidase A (873 aa).

The signal sequence occupies residues 1–19 (MRFGWLEVAALTAASVANA). N-linked (GlcNAc...) asparagine glycans are attached at residues Asn-71, Asn-222, and Asn-263. The active site involves Asp-291. Residues Asn-326, Asn-333, Asn-365, Asn-453, Asn-534, Asn-553, Asn-575, Asn-679, and Asn-725 are each glycosylated (N-linked (GlcNAc...) asparagine). Residues 731–764 (DSSDDPNYGWEDSEYIPEGARDGSPQPLLKAGGA) form a disordered region.

This sequence belongs to the glycosyl hydrolase 3 family.

The protein resides in the secreted. The enzyme catalyses Hydrolysis of terminal, non-reducing beta-D-glucosyl residues with release of beta-D-glucose.. It functions in the pathway glycan metabolism; cellulose degradation. Beta-glucosidases are one of a number of cellulolytic enzymes involved in the degradation of cellulosic biomass. Catalyzes the last step releasing glucose from the inhibitory cellobiose. The protein is Probable beta-glucosidase A (bglA) of Aspergillus fumigatus (strain CBS 144.89 / FGSC A1163 / CEA10) (Neosartorya fumigata).